Here is a 245-residue protein sequence, read N- to C-terminus: PF03932 family protein CutC (245 aa).

This sequence belongs to the CutC family.

It is found in the cytoplasm. The protein is PF03932 family protein CutC of Caulobacter vibrioides (strain ATCC 19089 / CIP 103742 / CB 15) (Caulobacter crescentus).